Reading from the N-terminus, the 468-residue chain is UDP-N-acetylmuramate--L-alanine ligase (468 aa).

112–118 is an ATP binding site; sequence GMHGKTT.

The protein belongs to the MurCDEF family.

The protein localises to the cytoplasm. It carries out the reaction UDP-N-acetyl-alpha-D-muramate + L-alanine + ATP = UDP-N-acetyl-alpha-D-muramoyl-L-alanine + ADP + phosphate + H(+). It participates in cell wall biogenesis; peptidoglycan biosynthesis. Its function is as follows. Cell wall formation. This is UDP-N-acetylmuramate--L-alanine ligase from Koribacter versatilis (strain Ellin345).